The chain runs to 192 residues: Adenylate kinase (192 aa).

An ATP-binding site is contributed by 12 to 17 (GSGKTT). An NMP region spans residues 34-63 (STGDLLRAQVASGSELGKTIDSFISKGNLV). Residues Thr-35, Arg-40, 61–63 (NLV), 88–91 (GYPR), and Gln-95 each bind AMP. The segment at 130 to 136 (GRNRGAD) is LID. Position 131 (Arg-131) interacts with ATP. AMP is bound by residues Arg-133 and Arg-145. ATP is bound at residue Arg-173.

The protein belongs to the adenylate kinase family. As to quaternary structure, monomer.

It is found in the cytoplasm. It catalyses the reaction AMP + ATP = 2 ADP. The protein operates within purine metabolism; AMP biosynthesis via salvage pathway; AMP from ADP: step 1/1. Functionally, catalyzes the reversible transfer of the terminal phosphate group between ATP and AMP. Plays an important role in cellular energy homeostasis and in adenine nucleotide metabolism. This Campylobacter jejuni subsp. doylei (strain ATCC BAA-1458 / RM4099 / 269.97) protein is Adenylate kinase.